The primary structure comprises 455 residues: SVGFKAGVKDYKLTYYTPDYKTKDTDILAAFRVTPQPGVPPEEAGAAVAAESSTGTWTTVWTDGLTSLDRYKGRCYHIEPVAGEESQFIAYVAYPLDLFEEGSVTNMFTSIVGNVFGFKALRALRLEDLRIPNAYVKTFQGPPHGIQVERDKLNKYGRPLLGCTIKPKLGLSAKNYGRAVYECLRGGLDFTKDDENVNSQPFMRWRDRFLFCAEALYKAQAETGEIKGHYLNATAGTCEEMIKRAVFARELGVPIVMHDYLTGGFTANTTLAHYCRDNGLLLHIHRAMHAVIDRQKNHGMHFRVLAKALRLSGGDHIHSGTVVGKLEGEREITLGFVDLLRDDFVEKDRSRGIYFTQDWVSLPGVLPVASGGIHVWHMPALTEIFGDDSVLQFGGGTLGHPWGNAPGAVANRVALEACVQARNEGRDLASEGNQIIREASKWSPELAAACEVWKE.

The residue at position 5 (Lys-5) is an N6,N6,N6-trimethyllysine. 2 residues coordinate substrate: Asn-114 and Thr-164. The active-site Proton acceptor is Lys-166. Position 168 (Lys-168) interacts with substrate. Lys-192, Asp-194, and Glu-195 together coordinate Mg(2+). N6-carboxylysine is present on Lys-192. The Proton acceptor role is filled by His-285. Residues Arg-286, His-318, and Ser-370 each contribute to the substrate site.

Belongs to the RuBisCO large chain family. Type I subfamily. As to quaternary structure, heterohexadecamer of 8 large chains and 8 small chains; disulfide-linked. The disulfide link is formed within the large subunit homodimers. Requires Mg(2+) as cofactor. The disulfide bond which can form in the large chain dimeric partners within the hexadecamer appears to be associated with oxidative stress and protein turnover.

The protein localises to the plastid. It localises to the chloroplast. The enzyme catalyses 2 (2R)-3-phosphoglycerate + 2 H(+) = D-ribulose 1,5-bisphosphate + CO2 + H2O. The catalysed reaction is D-ribulose 1,5-bisphosphate + O2 = 2-phosphoglycolate + (2R)-3-phosphoglycerate + 2 H(+). In terms of biological role, ruBisCO catalyzes two reactions: the carboxylation of D-ribulose 1,5-bisphosphate, the primary event in carbon dioxide fixation, as well as the oxidative fragmentation of the pentose substrate in the photorespiration process. Both reactions occur simultaneously and in competition at the same active site. In Lupinus latifolius (Broad-leaved lupine), this protein is Ribulose bisphosphate carboxylase large chain.